The chain runs to 171 residues: Protein-export protein SecB (171 aa).

Belongs to the SecB family. In terms of assembly, homotetramer, a dimer of dimers. One homotetramer interacts with 1 SecA dimer.

It is found in the cytoplasm. One of the proteins required for the normal export of preproteins out of the cell cytoplasm. It is a molecular chaperone that binds to a subset of precursor proteins, maintaining them in a translocation-competent state. It also specifically binds to its receptor SecA. This is Protein-export protein SecB from Histophilus somni (strain 2336) (Haemophilus somnus).